The primary structure comprises 331 residues: Putative serine/threonine-protein kinase ZK507.1 (331 aa).

The Protein kinase domain occupies 1–270 (MKVNEEGFAI…CKLTLKEPLV (270 aa)). The active-site Proton acceptor is the aspartate 116. Over residues 302–314 (SDRNEENSLDRSK) the composition is skewed to basic and acidic residues. A disordered region spans residues 302-331 (SDRNEENSLDRSKTGTLSFNNSKNKKPSRY).

This sequence belongs to the protein kinase superfamily. Ser/Thr protein kinase family.

It catalyses the reaction L-seryl-[protein] + ATP = O-phospho-L-seryl-[protein] + ADP + H(+). The enzyme catalyses L-threonyl-[protein] + ATP = O-phospho-L-threonyl-[protein] + ADP + H(+). This Caenorhabditis elegans protein is Putative serine/threonine-protein kinase ZK507.1.